Reading from the N-terminus, the 537-residue chain is Phosphoenolpyruvate carboxykinase (ATP) (537 aa).

3 residues coordinate substrate: R61, Y195, and K201. ATP is bound by residues K201, H220, and 236 to 244; that span reads GLSGTGKTT. K201 and H220 together coordinate Mn(2+). Residue D257 coordinates Mn(2+). ATP-binding residues include E285, R323, and T448. R323 lines the substrate pocket.

It belongs to the phosphoenolpyruvate carboxykinase (ATP) family. The cofactor is Mn(2+).

Its subcellular location is the cytoplasm. The enzyme catalyses oxaloacetate + ATP = phosphoenolpyruvate + ADP + CO2. The protein operates within carbohydrate biosynthesis; gluconeogenesis. Involved in the gluconeogenesis. Catalyzes the conversion of oxaloacetate (OAA) to phosphoenolpyruvate (PEP) through direct phosphoryl transfer between the nucleoside triphosphate and OAA. The polypeptide is Phosphoenolpyruvate carboxykinase (ATP) (Rhodopseudomonas palustris (strain BisA53)).